Consider the following 895-residue polypeptide: MAQYTPMIQQYLKVKADYKDAFLFFRLGDFYEMFFEDAVKAAHELEITLTSRDGGSSERIPMCGVPYHAAQNYIEQLIEKGYKVAICEQVEDPKTAKGVVRREVVQLITPGTMMEGRTIDEKENNFLAALTRFEDGSYALACNDLTTGQNTVTLLTGSVEDVLLEVYATGSKEIVVDSTFSQDELNKLTETLKMTVSYEEETKIPEGLEPLVKKVTQTKLVTAVGRLFNYVLRTQKRSLDHLQPVEIYYTNQFMKIDVHSKRNLELTETLRTKEKTGSLLWLLDKTKTAMGGRMLKQWMERPLIQKEKIEERLEMVETFVNDYFLREDLKEKLKEVYDLERLAGKVAYGSVNARDLLQLKRSLQQVPAILEAISLLDNSYAAKLIEGADPCEALTKLLDRSIQENPPLSVKDGDIIKDGYNEKLDEYRYISKNGKTWIAELEKREREITGIKSLKIGYNRIFGYYIEVTKANLSLLPEGRYERKQTLANAERFITDELKEKETLILEAEEKIVQLEYDLFTALREEVKVFIPKLQHLAKVISELDVLQSFATVSEEERFVKPVLTNKREIFIKDGRHPVVEKVLDGKLYVPNDCMMPENMDVFLITGPNMSGKSTYMRQLALVTIMAQIGCFVPATEAILPVFDQIFTRIGAADDLISGQSTFMVEMLEAKNAIANASERSLILFDEIGRGTSTYDGMALAQAIIEHIHDQIGAKTLFSTHYHELTVLEESLTHLKNVHVSAIEEDGKVVFLHKIQEGAADKSYGIHVAQLAELPDSLIARAKEVLAQLEGQEEITIPKRTEVKEQPERMQQPVIEEQPVIKEVAEVQQESEEIVEESQLSFFETEERMEKQEKPVLDAKETAVLAQIKKIDLLDMTPLEALNELYRLQKKLKKG.

607 to 614 (GPNMSGKS) provides a ligand contact to ATP.

This sequence belongs to the DNA mismatch repair MutS family.

Functionally, this protein is involved in the repair of mismatches in DNA. It is possible that it carries out the mismatch recognition step. This protein has a weak ATPase activity. The protein is DNA mismatch repair protein MutS of Bacillus cytotoxicus (strain DSM 22905 / CIP 110041 / 391-98 / NVH 391-98).